The primary structure comprises 231 residues: Protein APE_1056.1 (231 aa).

The region spanning 29–214 (VRIARRAVEE…ETEPRGPVVR (186 aa)) is the AMMECR1 domain.

This chain is Protein APE_1056.1, found in Aeropyrum pernix (strain ATCC 700893 / DSM 11879 / JCM 9820 / NBRC 100138 / K1).